Reading from the N-terminus, the 63-residue chain is Large ribosomal subunit protein uL30 (63 aa).

Belongs to the universal ribosomal protein uL30 family. As to quaternary structure, part of the 50S ribosomal subunit.

This chain is Large ribosomal subunit protein uL30, found in Rickettsia typhi (strain ATCC VR-144 / Wilmington).